Reading from the N-terminus, the 453-residue chain is Chromosomal replication initiator protein DnaA (453 aa).

The segment at Met-1–Val-76 is domain I, interacts with DnaA modulators. Residues Val-76 to Leu-115 are domain II. Residues Gly-116–Ala-333 are domain III, AAA+ region. Residues Gly-160, Gly-162, Lys-163, and Thr-164 each contribute to the ATP site. The domain IV, binds dsDNA stretch occupies residues Ala-334–Ser-453.

It belongs to the DnaA family. Oligomerizes as a right-handed, spiral filament on DNA at oriC.

The protein localises to the cytoplasm. In terms of biological role, plays an essential role in the initiation and regulation of chromosomal replication. ATP-DnaA binds to the origin of replication (oriC) to initiate formation of the DNA replication initiation complex once per cell cycle. Binds the DnaA box (a 9 base pair repeat at the origin) and separates the double-stranded (ds)DNA. Forms a right-handed helical filament on oriC DNA; dsDNA binds to the exterior of the filament while single-stranded (ss)DNA is stabiized in the filament's interior. The ATP-DnaA-oriC complex binds and stabilizes one strand of the AT-rich DNA unwinding element (DUE), permitting loading of DNA polymerase. After initiation quickly degrades to an ADP-DnaA complex that is not apt for DNA replication. Binds acidic phospholipids. The protein is Chromosomal replication initiator protein DnaA of Sphingopyxis alaskensis (strain DSM 13593 / LMG 18877 / RB2256) (Sphingomonas alaskensis).